Reading from the N-terminus, the 101-residue chain is NADH-quinone oxidoreductase subunit K (101 aa).

The next 3 membrane-spanning stretches (helical) occupy residues 4–24 (LAHF…GIFL), 30–50 (IVLL…FVAF), and 61–81 (VFVF…LAIL).

Belongs to the complex I subunit 4L family. NDH-1 is composed of 14 different subunits. Subunits NuoA, H, J, K, L, M, N constitute the membrane sector of the complex.

It is found in the cell inner membrane. The enzyme catalyses a quinone + NADH + 5 H(+)(in) = a quinol + NAD(+) + 4 H(+)(out). Functionally, NDH-1 shuttles electrons from NADH, via FMN and iron-sulfur (Fe-S) centers, to quinones in the respiratory chain. The immediate electron acceptor for the enzyme in this species is believed to be ubiquinone. Couples the redox reaction to proton translocation (for every two electrons transferred, four hydrogen ions are translocated across the cytoplasmic membrane), and thus conserves the redox energy in a proton gradient. In Cupriavidus taiwanensis (strain DSM 17343 / BCRC 17206 / CCUG 44338 / CIP 107171 / LMG 19424 / R1) (Ralstonia taiwanensis (strain LMG 19424)), this protein is NADH-quinone oxidoreductase subunit K.